The chain runs to 282 residues: NADPH-dependent 7-cyano-7-deazaguanine reductase (282 aa).

88 to 90 (IES) contacts substrate. 90–91 (SK) lines the NADPH pocket. C190 acts as the Thioimide intermediate in catalysis. D197 serves as the catalytic Proton donor. 229–230 (HE) contacts substrate. 258-259 (RG) is an NADPH binding site.

It belongs to the GTP cyclohydrolase I family. QueF type 2 subfamily. Homodimer.

The protein localises to the cytoplasm. It catalyses the reaction 7-aminomethyl-7-carbaguanine + 2 NADP(+) = 7-cyano-7-deazaguanine + 2 NADPH + 3 H(+). It functions in the pathway tRNA modification; tRNA-queuosine biosynthesis. Its function is as follows. Catalyzes the NADPH-dependent reduction of 7-cyano-7-deazaguanine (preQ0) to 7-aminomethyl-7-deazaguanine (preQ1). This Salmonella paratyphi A (strain ATCC 9150 / SARB42) protein is NADPH-dependent 7-cyano-7-deazaguanine reductase.